We begin with the raw amino-acid sequence, 447 residues long: Na(+)/H(+) antiporter NhaA 2 (447 aa).

Helical transmembrane passes span 30-50, 81-101, 117-137, 146-166, 175-195, 199-219, 220-240, 315-335, 350-370, 383-403, and 415-435; these read FIHI…LAVL, LHKW…ALEL, LLSI…YLLL, GWGT…ALLG, IFML…VAIG, AVDW…RAMA, FLGV…WLVI, LLHP…NAGV, VFVG…WIAV, WGMV…ALFI, and AAKL…FLCL.

Belongs to the NhaA Na(+)/H(+) (TC 2.A.33) antiporter family.

The protein localises to the cell inner membrane. The enzyme catalyses Na(+)(in) + 2 H(+)(out) = Na(+)(out) + 2 H(+)(in). Na(+)/H(+) antiporter that extrudes sodium in exchange for external protons. This Vibrio vulnificus (strain CMCP6) protein is Na(+)/H(+) antiporter NhaA 2.